Reading from the N-terminus, the 87-residue chain is Putative autophagy-related protein 8E (87 aa).

Basic and acidic residues predominate over residues 1-14; the sequence is MEERRKEKGKEGRR. The interval 1–30 is disordered; that stretch reads MEERRKEKGKEGRRGKATGHSVDKFSRSNL. G87 carries the Phosphatidylethanolamine amidated glycine lipid modification.

This sequence belongs to the ATG8 family. Interacts with ATG4. The C-terminal Gly is amidated with phosphatidylethanolamine by an activating system similar to that for ubiquitin.

It is found in the cytoplasmic vesicle. It localises to the autophagosome membrane. The protein resides in the vacuole membrane. The protein localises to the cytoplasm. Its subcellular location is the cytoskeleton. Its function is as follows. Ubiquitin-like modifier involved in autophagosomes formation. May mediate the delivery of the autophagosomes to the vacuole via the microtubule cytoskeleton. This is Putative autophagy-related protein 8E (ATG8E) from Oryza sativa subsp. japonica (Rice).